Consider the following 110-residue polypeptide: Cytochrome c6 (110 aa).

Residues 1–25 (MKKLVSSVILALILFGFSWVSPAFA) form the signal peptide. 4 residues coordinate heme c: cysteine 39, cysteine 42, histidine 43, and methionine 83.

Belongs to the cytochrome c family. PetJ subfamily. As to quaternary structure, monomer. Post-translationally, binds 1 heme c group covalently per subunit.

The protein resides in the cellular thylakoid lumen. In terms of biological role, functions as an electron carrier between membrane-bound cytochrome b6-f and photosystem I in oxygenic photosynthesis. The polypeptide is Cytochrome c6 (Gloeothece citriformis (strain PCC 7424) (Cyanothece sp. (strain PCC 7424))).